A 171-amino-acid chain; its full sequence is Adenine phosphoribosyltransferase (171 aa).

Belongs to the purine/pyrimidine phosphoribosyltransferase family. Homodimer.

The protein localises to the cytoplasm. The enzyme catalyses AMP + diphosphate = 5-phospho-alpha-D-ribose 1-diphosphate + adenine. Its pathway is purine metabolism; AMP biosynthesis via salvage pathway; AMP from adenine: step 1/1. Catalyzes a salvage reaction resulting in the formation of AMP, that is energically less costly than de novo synthesis. The chain is Adenine phosphoribosyltransferase from Ruminiclostridium cellulolyticum (strain ATCC 35319 / DSM 5812 / JCM 6584 / H10) (Clostridium cellulolyticum).